The primary structure comprises 504 residues: ATP synthase subunit alpha (504 aa).

ATP is bound at residue 169 to 176 (GDRGTGKT).

It belongs to the ATPase alpha/beta chains family. As to quaternary structure, F-type ATPases have 2 components, CF(1) - the catalytic core - and CF(0) - the membrane proton channel. CF(1) has five subunits: alpha(3), beta(3), gamma(1), delta(1), epsilon(1). CF(0) has three main subunits: a(1), b(2) and c(9-12). The alpha and beta chains form an alternating ring which encloses part of the gamma chain. CF(1) is attached to CF(0) by a central stalk formed by the gamma and epsilon chains, while a peripheral stalk is formed by the delta and b chains.

The protein resides in the cell inner membrane. It catalyses the reaction ATP + H2O + 4 H(+)(in) = ADP + phosphate + 5 H(+)(out). Functionally, produces ATP from ADP in the presence of a proton gradient across the membrane. The alpha chain is a regulatory subunit. This chain is ATP synthase subunit alpha, found in Leptospira biflexa serovar Patoc (strain Patoc 1 / Ames).